Consider the following 136-residue polypeptide: Riboflavin kinase (136 aa).

15 to 20 (GLGEGR) lines the CDP pocket. Mg(2+) contacts are provided by threonine 44 and asparagine 46. Positions 103 and 111 each coordinate FMN. 116-119 (YYLR) provides a ligand contact to CDP.

It belongs to the archaeal riboflavin kinase family. The cofactor is Mg(2+).

The catalysed reaction is riboflavin + CTP = CDP + FMN + H(+). Its pathway is cofactor biosynthesis; FMN biosynthesis; FMN from riboflavin (CTP route): step 1/1. In terms of biological role, catalyzes the CTP-dependent phosphorylation of riboflavin (vitamin B2) to form flavin mononucleotide (FMN). In Sulfurisphaera tokodaii (strain DSM 16993 / JCM 10545 / NBRC 100140 / 7) (Sulfolobus tokodaii), this protein is Riboflavin kinase.